Here is a 179-residue protein sequence, read N- to C-terminus: MAKLHDYYKDEVVNKLMTEFNYNSVMQVPRVEKITLNMGVGEAIADKKLLDNAAADLAAISGQKPLITKARKSVAGFKIRQGYPIGCKVTLRGERMWEFFERLITIAVPRIRDFRGLSAKSFDGRGNYSMGVREQIIFPEIDYDKVDRVRGLDITITTTAKSDEEGRALLAAFDFPFRK.

Belongs to the universal ribosomal protein uL5 family. As to quaternary structure, part of the 50S ribosomal subunit; part of the 5S rRNA/L5/L18/L25 subcomplex. Contacts the 5S rRNA and the P site tRNA. Forms a bridge to the 30S subunit in the 70S ribosome.

Functionally, this is one of the proteins that bind and probably mediate the attachment of the 5S RNA into the large ribosomal subunit, where it forms part of the central protuberance. In the 70S ribosome it contacts protein S13 of the 30S subunit (bridge B1b), connecting the 2 subunits; this bridge is implicated in subunit movement. Contacts the P site tRNA; the 5S rRNA and some of its associated proteins might help stabilize positioning of ribosome-bound tRNAs. The chain is Large ribosomal subunit protein uL5 from Citrobacter koseri (strain ATCC BAA-895 / CDC 4225-83 / SGSC4696).